Consider the following 159-residue polypeptide: Putative polyketide cyclase (159 aa).

This sequence to polyketide cyclases.

Functionally, involved in developmentally regulated synthesis of a compound biosynthetically related to polyketide antibiotics which is essential for spore color in Streptomyces coelicolor. In Streptomyces coelicolor (strain ATCC BAA-471 / A3(2) / M145), this protein is Putative polyketide cyclase.